We begin with the raw amino-acid sequence, 244 residues long: 1-(5-phosphoribosyl)-5-[(5-phosphoribosylamino)methylideneamino] imidazole-4-carboxamide isomerase (244 aa).

D10 acts as the Proton acceptor in catalysis. Catalysis depends on D132, which acts as the Proton donor.

This sequence belongs to the HisA/HisF family.

Its subcellular location is the cytoplasm. It catalyses the reaction 1-(5-phospho-beta-D-ribosyl)-5-[(5-phospho-beta-D-ribosylamino)methylideneamino]imidazole-4-carboxamide = 5-[(5-phospho-1-deoxy-D-ribulos-1-ylimino)methylamino]-1-(5-phospho-beta-D-ribosyl)imidazole-4-carboxamide. Its pathway is amino-acid biosynthesis; L-histidine biosynthesis; L-histidine from 5-phospho-alpha-D-ribose 1-diphosphate: step 4/9. This Xanthomonas euvesicatoria pv. vesicatoria (strain 85-10) (Xanthomonas campestris pv. vesicatoria) protein is 1-(5-phosphoribosyl)-5-[(5-phosphoribosylamino)methylideneamino] imidazole-4-carboxamide isomerase.